A 393-amino-acid chain; its full sequence is Sialyltransferase-like protein 1 (393 aa).

Residues 1–8 are Cytoplasmic-facing; that stretch reads MKRPLRRP. Residues 9–27 form a helical; Signal-anchor for type II membrane protein membrane-spanning segment; it reads FAVLLFVVLCAAASFPSVL. Residues 28–393 lie on the Lumenal side of the membrane; sequence RRSVGPAPVL…IAVPPVVFYH (366 aa). N-linked (GlcNAc...) asparagine glycosylation is found at asparagine 49, asparagine 212, and asparagine 258.

The protein belongs to the glycosyltransferase 29 family. As to expression, expressed in leaves and stalks. Expressed at low levels in roots.

The protein localises to the golgi apparatus membrane. In terms of biological role, possesses sialyltransferase-like activity in vitro. Transfers sialic acid to the oligosaccharide Gal-beta-1,3-GalNAc and to glycoproteins such as asialofetuin, alpha-1-acid glycoprotein (NeuAc-alpha-2,3-Gal-beta-1,3-GalNAc-) and andasialo-alpha-1-acid glycoprotein. The transferred sialic acid is linked to galactose of Gal-beta-1,3-GalNAc through alpha-2,6-linkage. The chain is Sialyltransferase-like protein 1 from Oryza sativa subsp. japonica (Rice).